We begin with the raw amino-acid sequence, 338 residues long: Tetraacyldisaccharide 4'-kinase (338 aa).

66-73 provides a ligand contact to ATP; it reads IAGGAGKT.

This sequence belongs to the LpxK family.

The catalysed reaction is a lipid A disaccharide + ATP = a lipid IVA + ADP + H(+). It participates in glycolipid biosynthesis; lipid IV(A) biosynthesis; lipid IV(A) from (3R)-3-hydroxytetradecanoyl-[acyl-carrier-protein] and UDP-N-acetyl-alpha-D-glucosamine: step 6/6. Functionally, transfers the gamma-phosphate of ATP to the 4'-position of a tetraacyldisaccharide 1-phosphate intermediate (termed DS-1-P) to form tetraacyldisaccharide 1,4'-bis-phosphate (lipid IVA). In Delftia acidovorans (strain DSM 14801 / SPH-1), this protein is Tetraacyldisaccharide 4'-kinase.